Consider the following 162-residue polypeptide: Transcription elongation factor GreA (162 aa).

A coiled-coil region spans residues 46–77; that stretch reads RENAEYKAAREEQTRLNNMVTRLQEEIERAQV.

Belongs to the GreA/GreB family.

Its function is as follows. Necessary for efficient RNA polymerase transcription elongation past template-encoded arresting sites. The arresting sites in DNA have the property of trapping a certain fraction of elongating RNA polymerases that pass through, resulting in locked ternary complexes. Cleavage of the nascent transcript by cleavage factors such as GreA or GreB allows the resumption of elongation from the new 3'terminus. GreA releases sequences of 2 to 3 nucleotides. This Treponema pallidum (strain Nichols) protein is Transcription elongation factor GreA.